The primary structure comprises 156 residues: Endoribonuclease YbeY (156 aa).

Zn(2+)-binding residues include H122, H126, and H132.

The protein belongs to the endoribonuclease YbeY family. Zn(2+) serves as cofactor.

It localises to the cytoplasm. In terms of biological role, single strand-specific metallo-endoribonuclease involved in late-stage 70S ribosome quality control and in maturation of the 3' terminus of the 16S rRNA. This is Endoribonuclease YbeY from Pediococcus pentosaceus (strain ATCC 25745 / CCUG 21536 / LMG 10740 / 183-1w).